The primary structure comprises 109 residues: Large ribosomal subunit protein uL22 (109 aa).

Belongs to the universal ribosomal protein uL22 family. In terms of assembly, part of the 50S ribosomal subunit.

This protein binds specifically to 23S rRNA; its binding is stimulated by other ribosomal proteins, e.g. L4, L17, and L20. It is important during the early stages of 50S assembly. It makes multiple contacts with different domains of the 23S rRNA in the assembled 50S subunit and ribosome. Functionally, the globular domain of the protein is located near the polypeptide exit tunnel on the outside of the subunit, while an extended beta-hairpin is found that lines the wall of the exit tunnel in the center of the 70S ribosome. The sequence is that of Large ribosomal subunit protein uL22 from Polaromonas sp. (strain JS666 / ATCC BAA-500).